A 150-amino-acid polypeptide reads, in one-letter code: UPF0178 protein BamMC406_1579 (150 aa).

It belongs to the UPF0178 family.

The chain is UPF0178 protein BamMC406_1579 from Burkholderia ambifaria (strain MC40-6).